A 436-amino-acid polypeptide reads, in one-letter code: GTPase Der (436 aa).

EngA-type G domains lie at 4 to 167 (PVVA…PKEE) and 176 to 351 (VKFS…DNHS). GTP contacts are provided by residues 10–17 (GRPNVGKS), 57–61 (DTGGI), 119–122 (NKVD), 182–189 (GRPNVGKS), 229–233 (DTAGM), and 294–297 (NKWD). Positions 352–436 (LRVQSSMLND…PIRVIARKRK (85 aa)) constitute a KH-like domain.

It belongs to the TRAFAC class TrmE-Era-EngA-EngB-Septin-like GTPase superfamily. EngA (Der) GTPase family. Associates with the 50S ribosomal subunit.

Its function is as follows. GTPase that plays an essential role in the late steps of ribosome biogenesis. The protein is GTPase Der of Listeria monocytogenes serotype 4b (strain F2365).